The primary structure comprises 152 residues: ADP-ribose glycohydrolase OARD1 (152 aa).

Position 2 is an N-acetylalanine (Ala2). Residues 2-152 (ASSLNEDPEG…TDIKITVYTL (151 aa)) enclose the Macro domain. Residue Ser4 is modified to Phosphoserine. Leu21 serves as a coordination point for substrate. The active-site Nucleophile is Lys84. Residues 119–125 (RIGCGLD) and Leu152 contribute to the substrate site. The Proton acceptor role is filled by Asp125.

As to expression, ubiquitous.

Its subcellular location is the nucleus. The protein localises to the nucleoplasm. The protein resides in the nucleolus. It localises to the chromosome. It carries out the reaction 2''-O-acetyl-ADP-D-ribose + H2O = ADP-D-ribose + acetate + H(+). It catalyses the reaction 5-O-(ADP-D-ribosyl)-L-glutamyl-[protein] + H2O = L-glutamyl-[protein] + ADP-D-ribose + H(+). The catalysed reaction is alpha-NAD(+) + H2O = ADP-D-ribose + nicotinamide + H(+). Its activity is regulated as follows. Subject to competitive inhibition by the product ADP-ribose. Its function is as follows. ADP-ribose glycohydrolase that hydrolyzes ADP-ribose and acts on different substrates, such as proteins ADP-ribosylated on glutamate and O-acetyl-ADP-D-ribose. Specifically acts as a glutamate mono-ADP-ribosylhydrolase by mediating the removal of mono-ADP-ribose attached to glutamate residues on proteins. Does not act on poly-ADP-ribosylated proteins: the poly-ADP-ribose chain of poly-ADP-ribosylated glutamate residues must by hydrolyzed into mono-ADP-ribosylated glutamate by PARG to become a substrate for OARD1. Deacetylates O-acetyl-ADP ribose, a signaling molecule generated by the deacetylation of acetylated lysine residues in histones and other proteins. Catalyzes the deacylation of O-acetyl-ADP-ribose, O-propionyl-ADP-ribose and O-butyryl-ADP-ribose, yielding ADP-ribose plus acetate, propionate and butyrate, respectively. The protein is ADP-ribose glycohydrolase OARD1 of Homo sapiens (Human).